The following is a 499-amino-acid chain: Probable malate:quinone oxidoreductase 4 (499 aa).

This sequence belongs to the MQO family. FAD is required as a cofactor.

The enzyme catalyses (S)-malate + a quinone = a quinol + oxaloacetate. Its pathway is carbohydrate metabolism; tricarboxylic acid cycle; oxaloacetate from (S)-malate (quinone route): step 1/1. This is Probable malate:quinone oxidoreductase 4 from Staphylococcus epidermidis (strain ATCC 35984 / DSM 28319 / BCRC 17069 / CCUG 31568 / BM 3577 / RP62A).